A 531-amino-acid chain; its full sequence is Pescadillo homolog (531 aa).

The BRCT domain maps to 309–398; the sequence is SIKTMFKGCV…RKLPTERYMP (90 aa).

Belongs to the pescadillo family.

The protein localises to the nucleus. It is found in the nucleolus. Its subcellular location is the nucleoplasm. Required for maturation of ribosomal RNAs and formation of the large ribosomal subunit. This chain is Pescadillo homolog, found in Caenorhabditis elegans.